The following is a 490-amino-acid chain: Cytochrome P450 2C25 (490 aa).

Residue cysteine 435 participates in heme binding.

Belongs to the cytochrome P450 family. It depends on heme as a cofactor.

It localises to the endoplasmic reticulum membrane. The protein resides in the microsome membrane. The catalysed reaction is an organic molecule + reduced [NADPH--hemoprotein reductase] + O2 = an alcohol + oxidized [NADPH--hemoprotein reductase] + H2O + H(+). In terms of biological role, catalyzes the hydroxylation of tolbutamide and the N-demethylation of aminopyrine and benzphetamine. Also has testosterone hydroxylase (16 beta) activity. The sequence is that of Cytochrome P450 2C25 (CYP2C25) from Mesocricetus auratus (Golden hamster).